Here is a 393-residue protein sequence, read N- to C-terminus: RNA polymerase II holoenzyme cyclin-like subunit (393 aa).

The 96-residue stretch at 51 to 146 folds into the Cyclin N-terminal domain; sequence ICKRLNLRQR…LLEEMEFDMV (96 aa).

It belongs to the cyclin family. Cyclin C subfamily. As to quaternary structure, component of the SRB8-11 complex, a regulatory module of the Mediator complex.

The protein localises to the nucleus. Its function is as follows. Component of the SRB8-11 complex. The SRB8-11 complex is a regulatory module of the Mediator complex which is itself involved in regulation of basal and activated RNA polymerase II-dependent transcription. The SRB8-11 complex may be involved in the transcriptional repression of a subset of genes regulated by Mediator. It may inhibit the association of the Mediator complex with RNA polymerase II to form the holoenzyme complex. The SRB8-11 complex phosphorylates the C-terminal domain (CTD) of the largest subunit of RNA polymerase II. The sequence is that of RNA polymerase II holoenzyme cyclin-like subunit (SSN8) from Mycosarcoma maydis (Corn smut fungus).